Reading from the N-terminus, the 378-residue chain is Succinyl-diaminopimelate desuccinylase (378 aa).

H66 is a Zn(2+) binding site. The active site involves D68. Position 100 (D100) interacts with Zn(2+). The active-site Proton acceptor is the E134. The Zn(2+) site is built by E135, E163, and H350.

The protein belongs to the peptidase M20A family. DapE subfamily. In terms of assembly, homodimer. The cofactor is Zn(2+). It depends on Co(2+) as a cofactor.

It catalyses the reaction N-succinyl-(2S,6S)-2,6-diaminopimelate + H2O = (2S,6S)-2,6-diaminopimelate + succinate. The protein operates within amino-acid biosynthesis; L-lysine biosynthesis via DAP pathway; LL-2,6-diaminopimelate from (S)-tetrahydrodipicolinate (succinylase route): step 3/3. In terms of biological role, catalyzes the hydrolysis of N-succinyl-L,L-diaminopimelic acid (SDAP), forming succinate and LL-2,6-diaminopimelate (DAP), an intermediate involved in the bacterial biosynthesis of lysine and meso-diaminopimelic acid, an essential component of bacterial cell walls. This chain is Succinyl-diaminopimelate desuccinylase, found in Hydrogenovibrio crunogenus (strain DSM 25203 / XCL-2) (Thiomicrospira crunogena).